The sequence spans 903 residues: MNAHATPTPAHEIDPTGATPVMAQFFEMKARQPDALIFFRMGDFYELFFDDAYKAAAALGISQTFRGTHNGQPIPMAGVPQHAAEAYLSKLIRLGFKVAVCEQMEDPAEAKKRGSKAVVRRDIVRVVTPGTLTEDGLLDARGANRLAAVALRAGQAAVASVELSTGEVEVLAVAKEGVAPILAALAPSETLVADRLLSDDSLSQTLRICGGLVQPMPSALSEPQASETRVKRLYGVETLDGFGGLSPAEIGALGLIAAHLEMTQAGRLPALRAPRRAADADVMAIDPATRSSLEIDRTQSGDRNGSLLAAIDRTVTAGGARMLASRLARPLLDVAAIDQRLDAVEWFVEHRQLRQRLREVLKGAGDMARALSRLALGRGGPRDLGCIRDTLKVGERLAGMAGGAPDPLSPPPFELEHAFKALTPALHEGLSQFLTTLEHGLGPDLPALARDGGFVAAGVRPELDQARGLRDDSRKVIAALESQLALESGVPLKIRHNGVLGYFVEATAGKADPLFQPPLNATFIHRQTLANQVRFTTVELADLDARIAQAAERALAMEVAAFEDWREQARLLADAIQIASEALARIDVASSLAEWAEDAGAVRPVVDASYAFDAKAARHPVVEAAVKRAGEPYTPNDCRLDASGETAARLSIVTGPNMAGKSTFLRQNALLAILAQSGCYVPAASFRLGVVDRLFSRVGAGDDLARGRSTFMMEMVETASILTQAGPRSLVILDEIGRGTATYDGLAIAWACAEALHDTNRCRALFATHYHELATLETRMAFVSNLSLRAKEWNGDLVFLHEAAPGPADRSYGVQVAKLAGVPAPVVVRAREVLDRLESKDQSPAKLDDLPLFAVSQAVAVTSAPAKAAPSAVETSLADLDVDGMSPREALEALYRLKGLLTA.

An ATP-binding site is contributed by 655–662; the sequence is GPNMAGKS.

It belongs to the DNA mismatch repair MutS family.

In terms of biological role, this protein is involved in the repair of mismatches in DNA. It is possible that it carries out the mismatch recognition step. This protein has a weak ATPase activity. In Caulobacter vibrioides (strain ATCC 19089 / CIP 103742 / CB 15) (Caulobacter crescentus), this protein is DNA mismatch repair protein MutS.